We begin with the raw amino-acid sequence, 238 residues long: Zinc-finger homeodomain protein 11 (238 aa).

A ZF-HD dimerization-type; degenerate zinc finger spans residues 12–59; that stretch reads YRECMRNHAAKLGTYANDGCCEYTPDDGHPAGLLCAACGCHRNFHRKD. The homeobox DNA-binding region spans 119 to 188; it reads RRRTRTKFTE…NHKAGGGGGG (70 aa). A compositionally biased stretch (gly residues) spans 183-200; it reads GGGGGGGGSGGPGAGGGA. The disordered stretch occupies residues 183 to 238; that stretch reads GGGGGGGGSGGPGAGGGAQTSSSTTRGGGDVGVGLSPAMGGDGEDDEEVRGSEMCM.

In terms of assembly, homo- and heterodimer with other ZFHD proteins.

The protein localises to the nucleus. Putative transcription factor. This Oryza sativa subsp. indica (Rice) protein is Zinc-finger homeodomain protein 11 (ZHD11).